We begin with the raw amino-acid sequence, 156 residues long: SsrA-binding protein (156 aa).

It belongs to the SmpB family.

The protein localises to the cytoplasm. In terms of biological role, required for rescue of stalled ribosomes mediated by trans-translation. Binds to transfer-messenger RNA (tmRNA), required for stable association of tmRNA with ribosomes. tmRNA and SmpB together mimic tRNA shape, replacing the anticodon stem-loop with SmpB. tmRNA is encoded by the ssrA gene; the 2 termini fold to resemble tRNA(Ala) and it encodes a 'tag peptide', a short internal open reading frame. During trans-translation Ala-aminoacylated tmRNA acts like a tRNA, entering the A-site of stalled ribosomes, displacing the stalled mRNA. The ribosome then switches to translate the ORF on the tmRNA; the nascent peptide is terminated with the 'tag peptide' encoded by the tmRNA and targeted for degradation. The ribosome is freed to recommence translation, which seems to be the essential function of trans-translation. The polypeptide is SsrA-binding protein (Staphylococcus carnosus (strain TM300)).